A 302-amino-acid polypeptide reads, in one-letter code: Lipoyl synthase (302 aa).

[4Fe-4S] cluster-binding residues include Cys-54, Cys-59, Cys-65, Cys-80, Cys-84, Cys-87, and Ser-291. In terms of domain architecture, Radical SAM core spans 66 to 280 (WSRKTATYML…RIYGKSIGFK (215 aa)).

This sequence belongs to the radical SAM superfamily. Lipoyl synthase family. [4Fe-4S] cluster serves as cofactor.

The protein localises to the cytoplasm. It catalyses the reaction [[Fe-S] cluster scaffold protein carrying a second [4Fe-4S](2+) cluster] + N(6)-octanoyl-L-lysyl-[protein] + 2 oxidized [2Fe-2S]-[ferredoxin] + 2 S-adenosyl-L-methionine + 4 H(+) = [[Fe-S] cluster scaffold protein] + N(6)-[(R)-dihydrolipoyl]-L-lysyl-[protein] + 4 Fe(3+) + 2 hydrogen sulfide + 2 5'-deoxyadenosine + 2 L-methionine + 2 reduced [2Fe-2S]-[ferredoxin]. It participates in protein modification; protein lipoylation via endogenous pathway; protein N(6)-(lipoyl)lysine from octanoyl-[acyl-carrier-protein]: step 2/2. Its function is as follows. Catalyzes the radical-mediated insertion of two sulfur atoms into the C-6 and C-8 positions of the octanoyl moiety bound to the lipoyl domains of lipoate-dependent enzymes, thereby converting the octanoylated domains into lipoylated derivatives. In Leptospira borgpetersenii serovar Hardjo-bovis (strain JB197), this protein is Lipoyl synthase.